The sequence spans 329 residues: E3 ubiquitin-protein ligase SINA-like 4 (329 aa).

Residues 1–12 (MTKLGRRNDGGG) show a composition bias toward basic and acidic residues. The disordered stretch occupies residues 1–58 (MTKLGRRNDGGGKSHRSSTKRQRRTSVSVDDPSPGEEEEKTLVVLTDDSDSEEDDKPL). The span at 13–24 (KSHRSSTKRQRR) shows a compositional bias: basic residues. An RING-type; degenerate zinc finger spans residues 86–122 (CPNCFDPLKKPIFQCNNGHLACFLCCIKLKKRCSFCK). The SBD stretch occupies residues 136–325 (VIKAGLVSCS…MEISIGDKND (190 aa)). The SIAH-type zinc finger occupies 139–198 (AGLVSCSNAIYGCKQSTTYGNQLQSHEKVCVFAPCSCPIKDCNYIGFYKDLINHFRATHK). Zn(2+)-binding residues include Cys-144, Cys-151, His-164, Cys-168, Cys-175, Cys-180, His-192, and His-197.

It belongs to the SINA (Seven in absentia) family.

It catalyses the reaction S-ubiquitinyl-[E2 ubiquitin-conjugating enzyme]-L-cysteine + [acceptor protein]-L-lysine = [E2 ubiquitin-conjugating enzyme]-L-cysteine + N(6)-ubiquitinyl-[acceptor protein]-L-lysine.. It functions in the pathway protein modification; protein ubiquitination. In terms of biological role, E3 ubiquitin-protein ligase that mediates ubiquitination and subsequent proteasomal degradation of target proteins. E3 ubiquitin ligases accept ubiquitin from an E2 ubiquitin-conjugating enzyme in the form of a thioester and then directly transfers the ubiquitin to targeted substrates. It probably triggers the ubiquitin-mediated degradation of different substrates. The sequence is that of E3 ubiquitin-protein ligase SINA-like 4 from Arabidopsis thaliana (Mouse-ear cress).